The primary structure comprises 171 residues: PIDD1 alternative open reading frame protein (171 aa).

Disordered regions lie at residues 1–22 (MSGL…RAGG) and 76–156 (ILAS…LCPA). A compositionally biased stretch (low complexity) spans 84-99 (GPSAAGGHPGPAASEP).

As to quaternary structure, interacts with calpain-2 catalytic subunit CAPN2. Post-translationally, cleaved in vitro following UV irradiation to induce caspase-mediated apoptosis and this cleavage is inhibited by a broad-spectrum caspase inhibitor.

The protein localises to the cytoplasm. It is found in the cytoskeleton. This is PIDD1 alternative open reading frame protein from Homo sapiens (Human).